A 95-amino-acid chain; its full sequence is Probable FAD-linked sulfhydryl oxidase OPG072 (95 aa).

The Intravirion segment spans residues 1–8 (MNPKHWGR). An ERV/ALR sulfhydryl oxidase domain is found at 1–95 (MNPKHWGRAV…AIDVSKVKPL (95 aa)). A helical membrane pass occupies residues 9–25 (AVWTIIFIVLSQAGLDG). The Virion surface segment spans residues 26-95 (NIEACKRKLY…AIDVSKVKPL (70 aa)). Cysteine 43 and cysteine 46 are joined by a disulfide.

Belongs to the orthopoxvirus OPG072 family. Interacts with OPG128; this interaction involves formation of a transient disulfide-bonded intermediate, allowing disulfide bond transfer. The cofactor is FAD.

It localises to the virion membrane. It is found in the host cytoplasm. The enzyme catalyses 2 R'C(R)SH + O2 = R'C(R)S-S(R)CR' + H2O2. Its function is as follows. FAD-dependent sulfhydryl oxidase that catalyzes disulfide bond formation. The complete pathway for formation of disulfide bonds in intracellular virion membrane proteins sequentially involves thiol-disulfide transfer between OPG072, OPG128 and OPG088. This chain is Probable FAD-linked sulfhydryl oxidase OPG072 (OPG072), found in Vaccinia virus (strain Copenhagen) (VACV).